A 544-amino-acid chain; its full sequence is CTP synthase (544 aa).

The interval 1–265 is amidoligase domain; it reads MARFIFITGG…DKAVLSAFGL (265 aa). Ser-13 contributes to the CTP binding site. Ser-13 is a UTP binding site. 14 to 19 serves as a coordination point for ATP; the sequence is SLGKGL. Tyr-54 lines the L-glutamine pocket. Asp-71 contacts ATP. Mg(2+)-binding residues include Asp-71 and Glu-139. Residues 146 to 148, 186 to 191, and Lys-222 contribute to the CTP site; these read DIE and KTKPTQ. Residues 186 to 191 and Lys-222 contribute to the UTP site; that span reads KTKPTQ. In terms of domain architecture, Glutamine amidotransferase type-1 spans 291-543; sequence TIGVVGKYVG…VAAALKQSRL (253 aa). Gly-355 provides a ligand contact to L-glutamine. Cys-382 functions as the Nucleophile; for glutamine hydrolysis in the catalytic mechanism. L-glutamine is bound by residues 383 to 386, Glu-406, and Arg-471; that span reads LGMQ. Catalysis depends on residues His-516 and Glu-518.

It belongs to the CTP synthase family. In terms of assembly, homotetramer.

The enzyme catalyses UTP + L-glutamine + ATP + H2O = CTP + L-glutamate + ADP + phosphate + 2 H(+). It catalyses the reaction L-glutamine + H2O = L-glutamate + NH4(+). It carries out the reaction UTP + NH4(+) + ATP = CTP + ADP + phosphate + 2 H(+). It functions in the pathway pyrimidine metabolism; CTP biosynthesis via de novo pathway; CTP from UDP: step 2/2. Its activity is regulated as follows. Allosterically activated by GTP, when glutamine is the substrate; GTP has no effect on the reaction when ammonia is the substrate. The allosteric effector GTP functions by stabilizing the protein conformation that binds the tetrahedral intermediate(s) formed during glutamine hydrolysis. Inhibited by the product CTP, via allosteric rather than competitive inhibition. Its function is as follows. Catalyzes the ATP-dependent amination of UTP to CTP with either L-glutamine or ammonia as the source of nitrogen. Regulates intracellular CTP levels through interactions with the four ribonucleotide triphosphates. The protein is CTP synthase of Zymomonas mobilis subsp. mobilis (strain ATCC 31821 / ZM4 / CP4).